The primary structure comprises 174 residues: Protein GrpE (174 aa).

A disordered region spans residues 1–35 (MAQDIKNEEVEEVQEEEVVETAEETTPEKSELDLA). Residues 9–25 (EVEEVQEEEVVETAEET) show a composition bias toward acidic residues. Over residues 26–35 (TPEKSELDLA) the composition is skewed to basic and acidic residues.

It belongs to the GrpE family. In terms of assembly, homodimer.

It is found in the cytoplasm. Participates actively in the response to hyperosmotic and heat shock by preventing the aggregation of stress-denatured proteins, in association with DnaK and GrpE. It is the nucleotide exchange factor for DnaK and may function as a thermosensor. Unfolded proteins bind initially to DnaJ; upon interaction with the DnaJ-bound protein, DnaK hydrolyzes its bound ATP, resulting in the formation of a stable complex. GrpE releases ADP from DnaK; ATP binding to DnaK triggers the release of the substrate protein, thus completing the reaction cycle. Several rounds of ATP-dependent interactions between DnaJ, DnaK and GrpE are required for fully efficient folding. This Streptococcus pneumoniae (strain ATCC 700669 / Spain 23F-1) protein is Protein GrpE.